Here is a 917-residue protein sequence, read N- to C-terminus: MQGLAVSCQLPPAAAAARWRPRASSSNREAVLQCWKYELSQDHYLGGPLRIGQSQGSLHRHRSTNFLRPAAAAISVEQDEVNTYLPKGDMWSVHKFGGTCMGTPKRIQCVANIVLGDSSERKLIIVSAMSKVTDMMYNLVQKAQSRDDSYAIALAEVFEKHMTAAKDLLDGEDLARFLSQLHSDVSNLRAMLRAIYIAGHATESFSDFVVGHGELWSAQMLSYAIKKSGAPCSWMDTREVLVVTPSGCNQVDPDYLECEKRLQKWFSRQPAEIIVATGFIASTAGNIPTTLKRDGSDFSAAIVGSLVRARQVTIWTDVDGVFSADPRKVSEAVILSTLSYQEAWEMSYFGANVLHPRTIIPVMKDNIPIVIRNMFNLSAPGTMICKQPANENGDLDACVKSFATVDNLALVNVEGTGMAGVPGTASAIFSAVKDVGANVIMISQASSEHSVCFAVPEKEVAVVSAELHDRFREALAAGRLSKVEVINGCSILAAVGLRMASTPGVSAILFDALAKANINVRAIAQGCSEYNITVVLKQQDCVRALRAAHSRFFLSKTTLAVGIIGPGLIGGALLNQLKNQTAVLKENMNIDLRVIGITGSSTMLLSDTGIDLTQWKQLLQKEAEPADIGSFVHHLSDNHVFPNKVLVDCTADTSVASHYYDWLKKGIHVITPNKKANSGPLDQYLKLRTMQRASYTHYFYEATVGAGLPIISTLRGLLETGDKILRIEGIFSGTLSYIFNNFEGTRAFSDVVAEAREAGYTEPDPRDDLSGTDVARKVVVLARESGLRLELSDIPVKSLVPETLASCSSADEFMQKLPSFDEDWARQRSDAEAAGEVLRYVGALDAVNRSGQVELRRYRRDHPFAQLSGSDNIIAFTTSRYKEQPLIVRGPGAGAEVTAGGVFCDILRLASYLGAPS.

The transit peptide at M1–D89 directs the protein to the chloroplast. The tract at residues M90–L338 is aspartokinase. Positions S339 to I563 are interface. ACT domains follow at residues V413 to G488 and A494 to G571. The homoserine dehydrogenase stretch occupies residues I564–S917. Residues I569 and T650 each coordinate NAD(+). Positions 569, 650, and 674 each coordinate NADP(+). Residues I569, T650, and K674 each contribute to the NADPH site. 4 residues coordinate Na(+): E701, V704, A706, and L708. Residues G759 and E762 each contribute to the NADP(+) site. E762 and D773 together coordinate L-homoserine. The active-site Proton donor is K777. G894 lines the NAD(+) pocket. G894 lines the NADP(+) pocket. G894 is a binding site for NADPH.

It in the N-terminal section; belongs to the aspartokinase family. The protein in the C-terminal section; belongs to the homoserine dehydrogenase family. In terms of assembly, homo- or heterodimer. It depends on a metal cation as a cofactor.

It localises to the plastid. Its subcellular location is the chloroplast. The catalysed reaction is L-homoserine + NADP(+) = L-aspartate 4-semialdehyde + NADPH + H(+). It catalyses the reaction L-homoserine + NAD(+) = L-aspartate 4-semialdehyde + NADH + H(+). It carries out the reaction L-aspartate + ATP = 4-phospho-L-aspartate + ADP. It functions in the pathway amino-acid biosynthesis; L-lysine biosynthesis via DAP pathway; (S)-tetrahydrodipicolinate from L-aspartate: step 1/4. The protein operates within amino-acid biosynthesis; L-methionine biosynthesis via de novo pathway; L-homoserine from L-aspartate: step 1/3. It participates in amino-acid biosynthesis; L-methionine biosynthesis via de novo pathway; L-homoserine from L-aspartate: step 3/3. Its pathway is amino-acid biosynthesis; L-threonine biosynthesis; L-threonine from L-aspartate: step 1/5. It functions in the pathway amino-acid biosynthesis; L-threonine biosynthesis; L-threonine from L-aspartate: step 3/5. In terms of biological role, bifunctional aspartate kinase and homoserine dehydrogenase that catalyzes the first and the third steps toward the synthesis of lysine, methionine and threonine from aspartate. The sequence is that of Bifunctional aspartokinase/homoserine dehydrogenase 2, chloroplastic (AKHSDH2) from Zea mays (Maize).